The sequence spans 290 residues: Protein MGF 110-9L (290 aa).

3 helical membrane passes run 1 to 19, 128 to 148, and 163 to 183; these read MKVI…VIQS, TENI…IGYI, and LLIF…IIMN. 2 N-linked (GlcNAc...) asparagine; by host glycosylation sites follow: Asn-242 and Asn-267.

This sequence belongs to the asfivirus MGF 110 family.

The protein resides in the host membrane. Plays a role in virus cell tropism, and may be required for efficient virus replication in macrophages. This is Protein MGF 110-9L from Ornithodoros (relapsing fever ticks).